The chain runs to 71 residues: Antimicrobial peptide VpCT4 (71 aa).

The signal sequence occupies residues 1-23; sequence MKTQFVILIVAIVILQLISQSEA. Leucine 39 is modified (leucine amide). Residues 40–71 constitute a propeptide that is removed on maturation; the sequence is GKRGVQNMDQFDDIFEPELSEADLRYLQDLLR.

Belongs to the non-disulfide-bridged peptide (NDBP) superfamily. Short antimicrobial peptide (group 4) family. As to expression, expressed by the venom gland.

It is found in the secreted. Its subcellular location is the target cell membrane. Functionally, antimicrobial peptide with potent activity against bacteria S.aureus (MIC=9.3 uM), weak activity against E.coli (MIC&gt;100 uM), and weak activity against pathogenic yeasts C.albicans (MIC=100 uM) and C.glabrata (MIC=100 uM). Is not very effective against P.aeruginosa (MIC&gt;300 uM). Also provokes high hemolysis on human erythrocytes (HC(50)=4.8 uM). In Mesomexovis punctatus (Scorpion), this protein is Antimicrobial peptide VpCT4.